The chain runs to 1385 residues: Serine-aspartate repeat-containing protein D (1385 aa).

The signal sequence occupies residues 1 to 35 (MLNRENKTAITRKGMVSNRLNKFSIRKYTVGTASI). Residues 23–34 (FSIRKYTVGTAS) carry the YSIRK-G/S signaling motif motif. The segment at 36 to 568 (LVGTTLIFGL…NNQSGGAGQE (533 aa)) is ligand binding A region. 2 disordered regions span residues 54–162 (ESTN…DLLE) and 200–224 (ETLV…KSTA). 2 stretches are compositionally biased toward polar residues: residues 62–71 (EATTSASDNQ) and 94–109 (EMVS…NGNK). Basic and acidic residues predominate over residues 130 to 145 (KSDEQASPKSTNEDLN). Positions 146–155 (TKQTISNQEG) are enriched in polar residues. Residues 205–214 (NNSNSNNENN) show a composition bias toward low complexity. CNA-B domains lie at 569 to 680 (VYKI…IYKP), 681 to 791 (KYNL…YKTP), 792 to 901 (KYNL…FYKP), 902 to 1012 (TYNL…YKTP), and 1013 to 1123 (KYSL…EEET). Disordered regions lie at residues 856-886 (FETP…TGVI), 972-992 (YTPT…GLTT), and 1077-1361 (FEKP…SNNA). Polar residues-rich tracts occupy residues 860–869 (SGYTPTQVGS) and 972–981 (YTPTSVTSGN). Positions 1081-1090 (TGLTQTGTNT) are enriched in low complexity. Composition is skewed to acidic residues over residues 1091-1101 (TEDDKDADGGE) and 1118-1324 (YYEE…DSDS). Positions 1348–1352 (LPETG) match the LPXTG sorting signal motif. Position 1351 is a pentaglycyl murein peptidoglycan amidated threonine (Thr-1351). Residues 1352–1385 (GNENSGSNNATLFGGLFAALGSLLLFGRRKKQNK) constitute a propeptide, removed by sortase.

This sequence belongs to the serine-aspartate repeat-containing protein (SDr) family. As to quaternary structure, interacts with host DSG1; this interaction increases S.aureus adherence to keratinocytes.

The protein localises to the secreted. It localises to the cell wall. Functionally, cell surface-associated calcium-binding protein which plays an important role in adhesion and pathogenesis. Mediates interactions with components of the extracellular matrix such as host DSG1 to promote bacterial adhesion to host cells. Contributes to the resistance to killing by innate immune components such as neutrophils present in blood and thus attenuates bacterial clearance. The sequence is that of Serine-aspartate repeat-containing protein D (sdrD) from Staphylococcus aureus (strain Mu50 / ATCC 700699).